Reading from the N-terminus, the 684-residue chain is Histone-lysine N-methyltransferase SETMAR (684 aa).

Residues Met-1–Met-345 form a histone-lysine N-methyltransferase region. The region spanning Pro-73–Gly-136 is the Pre-SET domain. The Zn(2+) site is built by Cys-75, Cys-77, Cys-82, Cys-87, Cys-89, Cys-118, Cys-122, Cys-124, and Cys-128. Residues Phe-139–Ser-263 form the SET domain. S-adenosyl-L-methionine contacts are provided by residues Lys-149–Trp-151, Tyr-192, Arg-220, and Asn-223–His-224. Zn(2+) contacts are provided by Cys-226, Cys-287, Cys-289, and Cys-294. The Post-SET domain occupies Leu-283–Pro-299. Positions Leu-346–Asp-684 are mariner transposase Hsmar1. 2 DNA-binding regions (H-T-H motif) span residues Lys-364 to Lys-395 and Thr-428 to Lys-448. Asp-496 lines the Mg(2+) pocket. The residue at position 498 (Lys-498) is an N6-methyllysine. Ser-508 carries the phosphoserine; by CHEK1 modification. Asp-588 contributes to the Mg(2+) binding site.

This sequence in the N-terminal section; belongs to the class V-like SAM-binding methyltransferase superfamily. It in the C-terminal section; belongs to the mariner transposase family. As to quaternary structure, homodimer. Interacts with PRPF19; required for SETMAR recruitment to damaged DNA sites. Interacts with PCNA. Interacts with TOP2A; stimulates TOP2A topoisomerase activity. May interact with RAD9A and/or RAD9B. The cofactor is Mg(2+). Post-translationally, methylated. Methylation regulates activity in DNA decatenation. Phosphorylated at Ser-508 by CHEK1 and dephosphorylated by protein phosphatase 2A/PP2A. Phosphorylation at Ser-508 is enhanced by DNA damage and promotes recruitment to damaged DNA. It stimulates DNA repair and impairs replication fork restart. As to expression, widely expressed, with highest expression in placenta and ovary and lowest expression in skeletal muscle.

Its subcellular location is the nucleus. The protein localises to the chromosome. The catalysed reaction is L-lysyl(36)-[histone H3] + 2 S-adenosyl-L-methionine = N(6),N(6)-dimethyl-L-lysyl(36)-[histone H3] + 2 S-adenosyl-L-homocysteine + 2 H(+). Functionally, protein derived from the fusion of a methylase with the transposase of an Hsmar1 transposon that plays a role in DNA double-strand break repair, stalled replication fork restart and DNA integration. DNA-binding protein, it is indirectly recruited to sites of DNA damage through protein-protein interactions. Also has kept a sequence-specific DNA-binding activity recognizing the 19-mer core of the 5'-terminal inverted repeats (TIRs) of the Hsmar1 element and displays a DNA nicking and end joining activity. In parallel, has a histone methyltransferase activity and methylates 'Lys-4' and 'Lys-36' of histone H3. Specifically mediates dimethylation of H3 'Lys-36' at sites of DNA double-strand break and may recruit proteins required for efficient DSB repair through non-homologous end-joining. Also regulates replication fork processing, promoting replication fork restart and regulating DNA decatenation through stimulation of the topoisomerase activity of TOP2A. The chain is Histone-lysine N-methyltransferase SETMAR from Homo sapiens (Human).